A 428-amino-acid chain; its full sequence is Light-independent protochlorophyllide reductase subunit N (428 aa).

Residues cysteine 31, cysteine 56, and cysteine 117 each coordinate [4Fe-4S] cluster.

It belongs to the BchN/ChlN family. As to quaternary structure, protochlorophyllide reductase is composed of three subunits; BchL, BchN and BchB. Forms a heterotetramer of two BchB and two BchN subunits. [4Fe-4S] cluster serves as cofactor.

The enzyme catalyses chlorophyllide a + oxidized 2[4Fe-4S]-[ferredoxin] + 2 ADP + 2 phosphate = protochlorophyllide a + reduced 2[4Fe-4S]-[ferredoxin] + 2 ATP + 2 H2O. It participates in porphyrin-containing compound metabolism; bacteriochlorophyll biosynthesis (light-independent). Its function is as follows. Component of the dark-operative protochlorophyllide reductase (DPOR) that uses Mg-ATP and reduced ferredoxin to reduce ring D of protochlorophyllide (Pchlide) to form chlorophyllide a (Chlide). This reaction is light-independent. The NB-protein (BchN-BchB) is the catalytic component of the complex. This is Light-independent protochlorophyllide reductase subunit N from Rhodopseudomonas palustris (strain HaA2).